Here is a 218-residue protein sequence, read N- to C-terminus: NAD(P)H-quinone oxidoreductase subunit I (218 aa).

4Fe-4S ferredoxin-type domains are found at residues 55–84 (GRIHYEFDKCIACEVCVRVCPINLPVVDWV) and 95–124 (RNYSIDFGACIFCGNCVEYCPTNCLSMTEE). 8 residues coordinate [4Fe-4S] cluster: cysteine 64, cysteine 67, cysteine 70, cysteine 74, cysteine 104, cysteine 107, cysteine 110, and cysteine 114. The tract at residues 179–218 (LRAGKLPSQIIKELQADKSEEEGKNNSSDMVPNKLNSTNK) is disordered. The span at 192 to 202 (LQADKSEEEGK) shows a compositional bias: basic and acidic residues. The segment covering 203–218 (NNSSDMVPNKLNSTNK) has biased composition (polar residues).

It belongs to the complex I 23 kDa subunit family. As to quaternary structure, NDH-1 is composed of at least 11 different subunits. It depends on [4Fe-4S] cluster as a cofactor.

The protein resides in the cellular thylakoid membrane. It catalyses the reaction a plastoquinone + NADH + (n+1) H(+)(in) = a plastoquinol + NAD(+) + n H(+)(out). It carries out the reaction a plastoquinone + NADPH + (n+1) H(+)(in) = a plastoquinol + NADP(+) + n H(+)(out). NDH-1 shuttles electrons from an unknown electron donor, via FMN and iron-sulfur (Fe-S) centers, to quinones in the respiratory and/or the photosynthetic chain. The immediate electron acceptor for the enzyme in this species is believed to be plastoquinone. Couples the redox reaction to proton translocation, and thus conserves the redox energy in a proton gradient. This is NAD(P)H-quinone oxidoreductase subunit I from Prochlorococcus marinus (strain NATL2A).